We begin with the raw amino-acid sequence, 202 residues long: Probable nicotinate-nucleotide adenylyltransferase (202 aa).

Belongs to the NadD family.

It carries out the reaction nicotinate beta-D-ribonucleotide + ATP + H(+) = deamido-NAD(+) + diphosphate. Its pathway is cofactor biosynthesis; NAD(+) biosynthesis; deamido-NAD(+) from nicotinate D-ribonucleotide: step 1/1. Catalyzes the reversible adenylation of nicotinate mononucleotide (NaMN) to nicotinic acid adenine dinucleotide (NaAD). This is Probable nicotinate-nucleotide adenylyltransferase from Clostridium perfringens (strain SM101 / Type A).